The chain runs to 93 residues: Em protein (93 aa).

The segment at M1 to S93 is disordered. Basic and acidic residues-rich tracts occupy residues S9–E19, A38–M52, and G73–S93.

This sequence belongs to the small hydrophilic plant seed protein family.

Functionally, it is thought to provide protection for the cytoplasm during the desiccation stage of embryo development. The chain is Em protein (EM) from Triticum aestivum (Wheat).